The primary structure comprises 28 residues: Potassium channel toxin alpha-KTx 13.2 (28 aa).

Cystine bridges form between C2-C19, C6-C24, and C10-C26. The interaction with Ca(2+)-activated K(+) channels stretch occupies residues 17–24; that stretch reads IKCINGSC.

The protein belongs to the short scorpion toxin superfamily. Potassium channel inhibitor family. Alpha-KTx 13 subfamily. As to expression, expressed by the venom gland.

Its subcellular location is the secreted. Its function is as follows. Potent and selective inhibitor of Kv1.2/KCNA2 potassium channels. This is Potassium channel toxin alpha-KTx 13.2 from Orthochirus scrobiculosus (Central Asian scorpion).